Consider the following 358-residue polypeptide: MSGAAARGDRLVGTWLLVICFMIFGMVVGGGHARTIGAGFVIQTWQPFTGIVPPLTHAAWERAFGLYKATAQYQAMQPKMTLAQFQSLYLPMFLDRDWGRLMAVVFLVPLAVFRLRGRISNRLTAWLLFLFGLGAGEATMGWYMTYEGMTSRILQPSPLYLGPHFVLAMLIFTAMLWTALTLRNPEPAILPGLARLRGLLSVSIGLIIATIGLGALVAASGALKVYNTFPLMDGHALPPHALAMHPLWLNFLANKATVQFEHRVAATVTAIVVVIAAAMGLRAPVGAKARDLFLLLAGLVSLQYILGMSTLVSGMAELGYVHELNAVLLLAACIACRHALRGATAAVPLPVYEMKAAE.

5 helical membrane passes run 11 to 31, 98 to 117, 123 to 143, 159 to 179, and 199 to 219; these read LVGT…VGGG, WGRL…RLRG, LTAW…MGWY, LYLG…LWTA, and LLSV…LVAA. Residue His262 coordinates heme. 3 helical membrane-spanning segments follow: residues 264–284, 292–312, and 315–335; these read VAAT…LRAP, LFLL…STLV, and MAEL…ACIA. Position 322 (His322) interacts with heme.

Belongs to the COX15/CtaA family. Type 2 subfamily. As to quaternary structure, interacts with CtaB. Requires heme b as cofactor.

The protein localises to the cell membrane. It catalyses the reaction Fe(II)-heme o + 2 A + H2O = Fe(II)-heme a + 2 AH2. It participates in porphyrin-containing compound metabolism; heme A biosynthesis; heme A from heme O: step 1/1. Its function is as follows. Catalyzes the conversion of heme O to heme A by two successive hydroxylations of the methyl group at C8. The first hydroxylation forms heme I, the second hydroxylation results in an unstable dihydroxymethyl group, which spontaneously dehydrates, resulting in the formyl group of heme A. This chain is Heme A synthase 1, found in Acidiphilium cryptum (strain JF-5).